The following is an 865-amino-acid chain: FO synthase (865 aa).

The tract at residues 1 to 21 (MIEGVTELATPNVPPAPPSPS) is disordered. Radical SAM core domains follow at residues 76 to 320 (ITYS…LGPD) and 544 to 785 (VTYV…DNIQ). A cofG-like region spans residues 77–409 (TYSRNVFIPL…PRIGAHVAAL (333 aa)). Positions 90, 94, 97, 558, 562, and 565 each coordinate [4Fe-4S] cluster. Positions 521–854 (DGAELDAVAA…RERTTVYGRV (334 aa)) are cofH-like.

In the N-terminal section; belongs to the radical SAM superfamily. CofG family. This sequence in the C-terminal section; belongs to the radical SAM superfamily. CofH family. It depends on [4Fe-4S] cluster as a cofactor.

It carries out the reaction 5-amino-6-(D-ribitylamino)uracil + L-tyrosine + S-adenosyl-L-methionine = 5-amino-5-(4-hydroxybenzyl)-6-(D-ribitylimino)-5,6-dihydrouracil + 2-iminoacetate + 5'-deoxyadenosine + L-methionine + H(+). It catalyses the reaction 5-amino-5-(4-hydroxybenzyl)-6-(D-ribitylimino)-5,6-dihydrouracil + S-adenosyl-L-methionine = 7,8-didemethyl-8-hydroxy-5-deazariboflavin + 5'-deoxyadenosine + L-methionine + NH4(+) + H(+). It participates in cofactor biosynthesis; coenzyme F0 biosynthesis. Catalyzes the radical-mediated synthesis of 7,8-didemethyl-8-hydroxy-5-deazariboflavin (FO) from 5-amino-6-(D-ribitylamino)uracil and L-tyrosine. The polypeptide is FO synthase (fbiC) (Nocardia farcinica (strain IFM 10152)).